The chain runs to 53 residues: Natriuretic peptide DNP-2 (53 aa).

A disulfide bridge links cysteine 7 with cysteine 23. A propeptide spanning residues 39 to 53 is cleaved from the precursor; that stretch reads IIRDLHPDSKQSQAA.

Belongs to the natriuretic peptide family. Expressed by the venom gland.

It is found in the secreted. Exhibits vasodilator, natriuretic and diuretic properties in animal models and human tissues. Acts by stimulating cGMP via the natriuretic peptide receptor 1 (NPR1). Is a poor agonist of the atrial natriuretic peptide receptor 2 (NPR2). Is not degraded by neutral endopeptidase (NEP/MME). Binds to atrial natriuretic peptide clearance receptor (NPR-C/NPR3), which may be responsible of the removal of DNP from the circulation. Increases calcium uptake and induces histamine release from rat peritoneal mast cells. Increases calcium-activated potassium (KCa) current in gastric antral circular smooth muscle cells by increasing cGMP production and activating inositol trisphosphate receptors (IP3Rs). In vivo, reduces both systolic and diastolic blood pressure with no effect on heart rate, when intravenously injected in conscious rabbits. The sequence is that of Natriuretic peptide DNP-2 from Dendroaspis angusticeps (Eastern green mamba).